Here is a 204-residue protein sequence, read N- to C-terminus: Small ribosomal subunit protein uS4 (204 aa).

Residues methionine 1–glycine 49 form a disordered region. Residues glutamine 94 to isoleucine 154 enclose the S4 RNA-binding domain.

Belongs to the universal ribosomal protein uS4 family. As to quaternary structure, part of the 30S ribosomal subunit. Contacts protein S5. The interaction surface between S4 and S5 is involved in control of translational fidelity.

In terms of biological role, one of the primary rRNA binding proteins, it binds directly to 16S rRNA where it nucleates assembly of the body of the 30S subunit. With S5 and S12 plays an important role in translational accuracy. In Erythrobacter litoralis (strain HTCC2594), this protein is Small ribosomal subunit protein uS4.